Consider the following 415-residue polypeptide: MSKTHLTEKKFSDFALYPPIVEVLDSKGFNNCTPIQALTLPTTLAGKDVAGQAQTGTGKTLAFLTATFHHLLTHPAAEGRQTNQPRALIMAPTRELAVQIHSDAEPLAQATGLKMGLAYGGDGYDKQLKVLEAGVDILVGTTGRLIDYTKQNYVNMSAIQVVVLDEADRMFDLGFIKDIRWLFRRMPAAAGRLNMLFSATLSYRVRELAFEHMNNAEYVEVEPLQKTGHRIQEELFYPSNEEKMRLLQTLIEEEWPDRCIIFANTKHRCEDIWGHLAADGHRVGLLTGDVSQKRRLRILEKFTQGALDILVATDVAARGLHIPSVTHVFNYDLPDDCEDYVHRIGRTGRAGESGCSISLACEEYALNLTAIESYIGHQIPVSKYNSDALLTDLPAPKRLTRRRSGAPRHNRKRPG.

The Q motif signature appears at 9 to 37 (KKFSDFALYPPIVEVLDSKGFNNCTPIQA). One can recognise a Helicase ATP-binding domain in the interval 40-219 (LPTTLAGKDV…FEHMNNAEYV (180 aa)). 53-60 (AQTGTGKT) contacts ATP. Residues 165-168 (DEAD) carry the DEAD box motif. A Helicase C-terminal domain is found at 245-390 (RLLQTLIEEE…VSKYNSDALL (146 aa)). The tract at residues 396–415 (PKRLTRRRSGAPRHNRKRPG) is disordered. Positions 398-415 (RLTRRRSGAPRHNRKRPG) are enriched in basic residues.

This sequence belongs to the DEAD box helicase family. RhlB subfamily. As to quaternary structure, component of the RNA degradosome, which is a multiprotein complex involved in RNA processing and mRNA degradation.

The protein localises to the cytoplasm. The enzyme catalyses ATP + H2O = ADP + phosphate + H(+). In terms of biological role, DEAD-box RNA helicase involved in RNA degradation. Has RNA-dependent ATPase activity and unwinds double-stranded RNA. The protein is ATP-dependent RNA helicase RhlB of Sodalis glossinidius (strain morsitans).